Here is a 367-residue protein sequence, read N- to C-terminus: MTPEILPIDQYDAQLEEKTGRLGAMMAPFDAPAPAVFRSPVSHYRMRAEFRIWHDGDDLYHIMFDQQTKQRIRVDQFPAASELINRLMPVLLNALRAEPVLRRKLFQLDYLSTLSGEIAVSLLYHKALDDEWRQRARELCDELRAQGFALQLIGRATKTKICLDRDYVDECLPVAGRQMIYRQVENSFTQPNAMMNIQMLEWALSVTQGSTGDLLELYCGNGNFSLALARNFERVLATEIAKPSVAAAQYNIAANQIDNVQIIRMAAEEFTQAMNGVRQFNRLQGIDLAGYRCETIFVDPPRSGLDDGTAKLVQAYPRILYISCNPETLCANLETLSQTHRISQLALFDQFPYTHHMECGVLLEKRQ.

S-adenosyl-L-methionine-binding residues include Q190, Y218, N223, E239, and D299. The active-site Nucleophile is C324. E358 acts as the Proton acceptor in catalysis.

This sequence belongs to the class I-like SAM-binding methyltransferase superfamily. RNA M5U methyltransferase family. TrmA subfamily.

It carries out the reaction uridine(54) in tRNA + S-adenosyl-L-methionine = 5-methyluridine(54) in tRNA + S-adenosyl-L-homocysteine + H(+). The catalysed reaction is uridine(341) in tmRNA + S-adenosyl-L-methionine = 5-methyluridine(341) in tmRNA + S-adenosyl-L-homocysteine + H(+). Its function is as follows. Dual-specificity methyltransferase that catalyzes the formation of 5-methyluridine at position 54 (m5U54) in all tRNAs, and that of position 341 (m5U341) in tmRNA (transfer-mRNA). The chain is tRNA/tmRNA (uracil-C(5))-methyltransferase from Dickeya chrysanthemi (strain Ech1591) (Dickeya zeae (strain Ech1591)).